A 339-amino-acid chain; its full sequence is MAATNDPELTRRKQRQEDFLRGTSKINFDDHIDHCVLSGKTAIVTGGASGIGHGIAQALSSNGCKVAVLDLSGPLEAGTDESNIDSPKLFECDVSSWESLLAAFQEVLIWSGNSLDIVVLSAGVRSHNIKDLILERPAGSTSTPVKPPSSVFDVNLLGTYYSAYLALWYFTNLEAKRDEAEFNWKPQLLFIGSLASYVEQPLSADYCASKHGVRGLWKSVRSHSALFGDCQTNLLAPTFIDNRQGSTKSRGDGALISLTNDVKLGEVSDVVAGALRCLCDRNIEGRALCCVKGEQSSPGSNNFDLCDNLIDFNAGKSVLDSFRNGVVGRLGTQNTTGPQ.

The NADP(+) site is built by Ser49, Ile51, Asp93, Tyr206, Lys210, Ile240, and Gln244. Catalysis depends on Tyr206, which acts as the Proton acceptor. Lys210 acts as the Lowers pKa of active site Tyr in catalysis.

It belongs to the short-chain dehydrogenases/reductases (SDR) family. In terms of assembly, homodimer.

The protein localises to the cytoplasm. Its subcellular location is the cytosol. The protein operates within secondary metabolite biosynthesis. Its function is as follows. NADP-dependent dehydrogenase; part of the gene cluster that mediates the biosynthesis of squalestatin S1 (SQS1, also known as zaragozic acid A), a heavily oxidized fungal polyketide that offers potent cholesterol lowering activity by targeting squalene synthase (SS). SQS1 is composed of a 2,8-dioxobicyclic[3.2.1]octane-3,4,5-tricarboxyclic acid core that is connected to two lipophilic polyketide arms. These initial steps feature the priming of an unusual benzoic acid starter unit onto the highly reducing polyketide synthase pks2, followed by oxaloacetate extension and product release to generate a tricarboxylic acid containing product. The phenylalanine ammonia lyase (PAL) M7 and the acyl-CoA ligase M9 are involved in transforming phenylalanine into benzoyl-CoA. The citrate synthase-like protein R3 is involved in connecting the C-alpha-carbons of the hexaketide chain and oxaloacetate to afford the tricarboxylic acid unit. The potential hydrolytic enzymes, M8 and M10, are in close proximity to pks2 and may participate in product release. On the other side, the tetraketide arm is synthesized by a the squalestatin tetraketide synthase pks1 and enzymatically esterified to the core in the last biosynthetic step, by the acetyltransferase M4. The biosynthesis of the tetraketide must involve 3 rounds of chain extension. After the first and second rounds methyl-transfer occurs, and in all rounds of extension the ketoreductase and dehydratase are active. The enoyl reductase and C-MeT of pks1 are not active in the final round of extension. The acetyltransferase M4 appears to have a broad substrate selectivity for its acyl CoA substrate, allowing the in vitro synthesis of novel squalestatins. The biosynthesis of SQS1 requires several oxidative steps likely performed by oxidoreductases M1, R1 and R2. Finally, in support of the identification of the cluster as being responsible for SQS1 production, the cluster contains a gene encoding a putative squalene synthase (SS) R6, suggesting a likely mechanism for self-resistance. The chain is NADP-dependent dehydrogenase M3 from Phoma sp. (strain ATCC 20986 / MF5453).